A 129-amino-acid polypeptide reads, in one-letter code: MAKAPIRARKRVRKTVSDGVAHIHASFNNTIVTITDRQGNALGWATAGGSGFRGSRKSTPFAAQVAAERCAEAVKEYGIKNLEVMVKGPGPGRESTIRALNAAGFRITNITDVTPIPHNGCRPPKKRRV.

This sequence belongs to the universal ribosomal protein uS11 family. As to quaternary structure, part of the 30S ribosomal subunit. Interacts with proteins S7 and S18. Binds to IF-3.

Functionally, located on the platform of the 30S subunit, it bridges several disparate RNA helices of the 16S rRNA. Forms part of the Shine-Dalgarno cleft in the 70S ribosome. The protein is Small ribosomal subunit protein uS11 of Yersinia pseudotuberculosis serotype O:1b (strain IP 31758).